Consider the following 359-residue polypeptide: Protein-L-isoaspartate O-methyltransferase domain-containing protein 2 (359 aa).

Residue Gly-2 is the site of N-myristoyl glycine attachment. The active site involves Ser-64. 3 adoMet binding motif regions span residues 85-94 (LNLGSGTGYL), 160-164 (YDRVY), and 181-191 (LKVGGILVMPL). Residues 240–250 (VRSLQDLARLA) are BC-box. Positions 301 to 328 (SNPSDDTSCEDAEEDRREVAERTLQETK) are disordered. Positions 314–328 (EDRREVAERTLQETK) are enriched in basic and acidic residues. The tract at residues 343-346 (LPLP) is CUL-box.

The protein belongs to the methyltransferase superfamily. L-isoaspartyl/D-aspartyl protein methyltransferase family.

Its subcellular location is the cytoplasm. Functionally, may act as a substrate recognition component of an ECS (Elongin BC-CUL5-SOCS-box protein) E3 ubiquitin ligase complex which mediates the ubiquitination and subsequent proteasomal degradation of target proteins. May bind to the methyltransferase cofactor S-adenosylmethionine (AdoMet) via the N-terminal AdoMet binding motif, but probably does not display methyltransferase activity. The protein is Protein-L-isoaspartate O-methyltransferase domain-containing protein 2 (Pcmtd2) of Mus musculus (Mouse).